The chain runs to 241 residues: Probable GTP-binding protein EngB (241 aa).

The region spanning 56–240 is the EngB-type G domain; sequence GPVEIAFAGR…RAAIALLLKE (185 aa). Residues 64 to 71, 91 to 95, 118 to 121, 185 to 188, and 219 to 221 each bind GTP; these read GRSNVGKS, GRTQE, DMPG, TKID, and TSS. The Mg(2+) site is built by Ser71 and Thr93.

This sequence belongs to the TRAFAC class TrmE-Era-EngA-EngB-Septin-like GTPase superfamily. EngB GTPase family. Mg(2+) is required as a cofactor.

Its function is as follows. Necessary for normal cell division and for the maintenance of normal septation. The protein is Probable GTP-binding protein EngB of Brucella suis biovar 1 (strain 1330).